The primary structure comprises 369 residues: MWIKELNLTHYRNYQQASAAFSPGLNVFIGDNAQGKTNFLEAIYFLSVTRSHRTKSDKDLIYFDERDCSISGTLERLSGRVQLEILLSDKGRITKINTLKQAKLSDYIGAMMVVLFAPEDLQLVKGSPNLRRKFMDIDLGQIKPVYLSDLSHYNHVLKQRNAYLKSVHQLDNDFLSVLDEQLVTYGSRVMAHRLAFVQSLAKEANKHHQAISNGLEKLSISYQASVSFEHQQEIYQQFMNQLKTTHQRDFLRKNTGVGPHRDDLVFYINDMNANFASQGQHRSLILSLKMAEVSLMKQLTGDNPILLLDDVMSELDNTRQTKLLGAVKKENVQTFITTTSLEHLSQLPKDISLFKVNKGTIERDSIMID.

30–37 (GDNAQGKT) serves as a coordination point for ATP.

Belongs to the RecF family.

The protein resides in the cytoplasm. Functionally, the RecF protein is involved in DNA metabolism; it is required for DNA replication and normal SOS inducibility. RecF binds preferentially to single-stranded, linear DNA. It also seems to bind ATP. This Streptococcus equi subsp. equi (strain 4047) protein is DNA replication and repair protein RecF.